The chain runs to 3343 residues: Breast cancer type 2 susceptibility protein homolog (3343 aa).

The segment at 1–40 is interaction with PALB2; sequence MTVEYKRRPTFWEIFKARCSTADLGPISLNWFEELFSEAP. The interval 40–60 is disordered; the sequence is PPYNTEHPEESEYKPQGHEPQ. A compositionally biased stretch (basic and acidic residues) spans 45 to 56; sequence EHPEESEYKPQG. Phosphoserine is present on S70. The segment at 348 to 381 is disordered; that stretch reads IEPRDSEPLDPSVTNQKPLYSQSGDISSEAGQCS. The segment covering 359-381 has biased composition (polar residues); sequence SVTNQKPLYSQSGDISSEAGQCS. 2 positions are modified to phosphoserine: S475 and S736. Positions 622 to 982 are interaction with NPM1; it reads PDSSIKRSNL…DKWSEFLDPL (361 aa). BRCA2 repeat units follow at residues 984-1018, 1197-1231, 1405-1439, 1503-1537, 1645-1669, 1828-1845, 1939-1973, and 2019-2053; these read NHKL…DIEE, KEME…DIEN, MKEF…QETE, KEPT…ETQY, CYTG…WLRE, FITT…IFTD, PSRT…EIDG, and SSFV…EFDL. Positions 985-2050 are interaction with RAD51; sequence HKLGGSFRTA…LHKVKGMLEE (1066 aa). 3 disordered regions span residues 2059 to 2138, 2297 to 2356, and 2377 to 2407; these read TLQH…VLGT, PFCS…SDKS, and DSKN…PQFN. S2063 is subject to Phosphoserine. Composition is skewed to polar residues over residues 2083–2094 and 2101–2125; these read PEYSVSSKLQKT and SPSN…QLSQ. The interval 2233–2300 is interaction with HSF2BP; sequence RKRGGMAGVA…EPVTCGPFCS (68 aa). Polar residues-rich tracts occupy residues 2307–2320 and 2332–2342; these read TQSP…QGLQ and GKSSSNPTVSA. The interval 2313-2475 is interaction with FANCD2; that stretch reads TSPAQGLQSK…SPKQLYMYGV (163 aa). A compositionally biased stretch (basic and acidic residues) spans 2344–2356; sequence RSERTRHSVSDKS. The segment at 2411 to 2762 is interaction with SEM1; that stretch reads MSSLQNARDL…QRVYPLQWVE (352 aa). A Nuclear export signal; masked by interaction with SEM1 motif is present at residues 2612-2628; sequence AAKTLVLCVSDIISLST. The disordered stretch occupies residues 3114-3163; it reads DSPKWSTPNKDPTREPYPASTCSASDLASGGQLPRSSPTDQQSYRSPLSC. A compositionally biased stretch (polar residues) spans 3147–3163; sequence PRSSPTDQQSYRSPLSC. Residue S3222 is modified to Phosphoserine; by CDK1 and CDK2. 2 disordered regions span residues 3231–3255 and 3289–3343; these read PPRS…WSRA and VGGS…PDYS. Phosphoserine is present on S3250. Residues 3295–3310 show a composition bias toward polar residues; it reads VFPSDSTRTEGPSAST. The segment covering 3318–3334 has biased composition (basic and acidic residues); it reads SKRESLRDCRDDSDGKL.

Monomer and dimer. Interacts with RAD51; regulates RAD51 recruitment and function at sites of DNA repair. Interacts with SEM1, WDR16, USP11, DMC1, ROCK2 and NPM1. Interacts with both nonubiquitinated and monoubiquitinated FANCD2; this complex also includes XRCC3 and phosphorylated FANCG. Part of a BRCA complex containing BRCA1, BRCA2 and PALB2. Component of the homologous recombination repair (HR) complex composed of ERCC5/XPG, BRCA2, PALB2, DSS1 and RAD51. Within the complex, interacts with ERCC5/XPG and PALB2. Interacts directly with PALB2 which may serve as a scaffold for a HR complex containing PALB2, BRCA2, RAD51C, RAD51 and XRCC3. Interacts with BRCA1 only in the presence of PALB2 which serves as the bridging protein. Interacts with POLH; the interaction is direct. Interacts with the TREX-2 complex subunits PCID2 and SEM1. Interacts with HSF2BP and BRME1; the interaction with HSF2BP is direct and allows the formation of a ternary complex. The complex BRME1:HSF2BP:BRCA2 interacts with SPATA22, MEIOB and RAD51. Phosphorylated by ATM upon irradiation-induced DNA damage. Phosphorylation by CHEK1 and CHEK2 regulates interaction with RAD51. Phosphorylation at Ser-3222 by CDK1 and CDK2 is low in S phase when recombination is active, but increases as cells progress towards mitosis; this phosphorylation prevents homologous recombination-dependent repair during S phase and G2 by inhibiting RAD51 binding. In terms of processing, ubiquitinated in the absence of DNA damage; this does not lead to proteasomal degradation. In contrast, ubiquitination in response to DNA damage leads to proteasomal degradation. Highest expression in testis. Also expressed in spleen, skeletal muscle, thymus, mammary gland, heart, ovary, prostate, liver, lung, kidney and brain.

Its subcellular location is the nucleus. It is found in the cytoplasm. It localises to the cytoskeleton. The protein localises to the microtubule organizing center. The protein resides in the centrosome. Its function is as follows. Involved in double-strand break repair and/or homologous recombination. Binds RAD51 and potentiates recombinational DNA repair by promoting assembly of RAD51 onto single-stranded DNA (ssDNA). Acts by targeting RAD51 to ssDNA over double-stranded DNA, enabling RAD51 to displace replication protein-A (RPA) from ssDNA and stabilizing RAD51-ssDNA filaments by blocking ATP hydrolysis. Part of a PALB2-scaffolded HR complex containing RAD51C and which is thought to play a role in DNA repair by HR. May participate in S phase checkpoint activation. Binds selectively to ssDNA, and to ssDNA in tailed duplexes and replication fork structures. May play a role in the extension step after strand invasion at replication-dependent DNA double-strand breaks; together with PALB2 is involved in both POLH localization at collapsed replication forks and DNA polymerization activity. In concert with NPM1, regulates centrosome duplication. Interacts with the TREX-2 complex (transcription and export complex 2) subunits PCID2 and SEM1, and is required to prevent R-loop-associated DNA damage and thus transcription-associated genomic instability, independently of its known role in homologous recombination. The sequence is that of Breast cancer type 2 susceptibility protein homolog from Rattus norvegicus (Rat).